The chain runs to 1404 residues: DNA-directed RNA polymerase subunit beta' (1404 aa).

Positions 70, 72, 85, and 88 each coordinate Zn(2+). Mg(2+)-binding residues include D460, D462, and D464. 4 residues coordinate Zn(2+): C814, C888, C895, and C898.

Belongs to the RNA polymerase beta' chain family. The RNAP catalytic core consists of 2 alpha, 1 beta, 1 beta' and 1 omega subunit. When a sigma factor is associated with the core the holoenzyme is formed, which can initiate transcription. The cofactor is Mg(2+). Zn(2+) serves as cofactor.

The enzyme catalyses RNA(n) + a ribonucleoside 5'-triphosphate = RNA(n+1) + diphosphate. In terms of biological role, DNA-dependent RNA polymerase catalyzes the transcription of DNA into RNA using the four ribonucleoside triphosphates as substrates. This is DNA-directed RNA polymerase subunit beta' from Shewanella amazonensis (strain ATCC BAA-1098 / SB2B).